We begin with the raw amino-acid sequence, 88 residues long: LYR motif-containing protein 2 (88 aa).

Residues 1-19 constitute a mitochondrion transit peptide; the sequence is MAVSRLPPAALSLKQFLQR.

Belongs to the complex I LYR family.

It is found in the mitochondrion. Its function is as follows. Involved in efficient integration of the N-module into mitochondrial respiratory chain complex I. This is LYR motif-containing protein 2 (lyrm2) from Danio rerio (Zebrafish).